A 256-amino-acid chain; its full sequence is Imidazole glycerol phosphate synthase subunit HisF (256 aa).

Residues aspartate 11 and aspartate 130 contribute to the active site.

The protein belongs to the HisA/HisF family. As to quaternary structure, heterodimer of HisH and HisF.

Its subcellular location is the cytoplasm. The catalysed reaction is 5-[(5-phospho-1-deoxy-D-ribulos-1-ylimino)methylamino]-1-(5-phospho-beta-D-ribosyl)imidazole-4-carboxamide + L-glutamine = D-erythro-1-(imidazol-4-yl)glycerol 3-phosphate + 5-amino-1-(5-phospho-beta-D-ribosyl)imidazole-4-carboxamide + L-glutamate + H(+). The protein operates within amino-acid biosynthesis; L-histidine biosynthesis; L-histidine from 5-phospho-alpha-D-ribose 1-diphosphate: step 5/9. IGPS catalyzes the conversion of PRFAR and glutamine to IGP, AICAR and glutamate. The HisF subunit catalyzes the cyclization activity that produces IGP and AICAR from PRFAR using the ammonia provided by the HisH subunit. The chain is Imidazole glycerol phosphate synthase subunit HisF from Prochlorococcus marinus (strain NATL1A).